The sequence spans 321 residues: Ubiquitin carboxyl-terminal hydrolase ubh-4 (321 aa).

The 215-residue stretch at 6-220 folds into the UCH catalytic domain; the sequence is SWCLIESDPG…ITFNLMALVP (215 aa). Cys-83 acts as the Nucleophile in catalysis. Residue His-158 is the Proton donor of the active site. In terms of domain architecture, ULD spans 273–301; it reads NYTPFVIELMKILAKEGKLVGLVDNAYQA.

Belongs to the peptidase C12 family. Interacts with proteasome 19S subunit rpn-13. As to expression, highly expressed in intestine and to a lesser extent in other tissues including muscles and neurons.

The enzyme catalyses Thiol-dependent hydrolysis of ester, thioester, amide, peptide and isopeptide bonds formed by the C-terminal Gly of ubiquitin (a 76-residue protein attached to proteins as an intracellular targeting signal).. Functionally, ubiquitin-protein hydrolase involved both in the processing of ubiquitin precursors and of ubiquitinated proteins. This enzyme is a thiol protease that recognizes and hydrolyzes a peptide bond at the C-terminal glycine of ubiquitin. This Caenorhabditis elegans protein is Ubiquitin carboxyl-terminal hydrolase ubh-4.